We begin with the raw amino-acid sequence, 343 residues long: N-acetyl-gamma-glutamyl-phosphate reductase (343 aa).

Residue Cys147 is part of the active site.

This sequence belongs to the NAGSA dehydrogenase family. Type 1 subfamily.

The protein resides in the cytoplasm. It carries out the reaction N-acetyl-L-glutamate 5-semialdehyde + phosphate + NADP(+) = N-acetyl-L-glutamyl 5-phosphate + NADPH + H(+). The protein operates within amino-acid biosynthesis; L-arginine biosynthesis; N(2)-acetyl-L-ornithine from L-glutamate: step 3/4. Functionally, catalyzes the NADPH-dependent reduction of N-acetyl-5-glutamyl phosphate to yield N-acetyl-L-glutamate 5-semialdehyde. This chain is N-acetyl-gamma-glutamyl-phosphate reductase, found in Staphylococcus aureus (strain Mu3 / ATCC 700698).